A 262-amino-acid chain; its full sequence is Acyl-coenzyme A diphosphatase FITM2 (262 aa).

Residues 1–23 (MEHLERCAWVLRGTLVRAAVRRY) lie on the Cytoplasmic side of the membrane. The chain crosses the membrane as a helical span at residues 24-44 (LPWALAASMLAGSLLKELSPL). Topologically, residues 45 to 57 (PESYLSNKRNVLN) are lumenal. Residues 58-78 (VYFVKVAWAWTFCLLLPFIAL) form a helical membrane-spanning segment. The Cytoplasmic portion of the chain corresponds to 79-93 (TNYHLTGKAGLVLRR). The chain crosses the membrane as a helical span at residues 94-114 (LSTLLVGTAIWYVCTAIFSNV). The Lumenal segment spans residues 115–145 (EHYTGSCYQSPALEGVRNEPLSKQQCHGQGG). The chain crosses the membrane as a helical span at residues 146-166 (FWHGFDISGHSFLLTFCALMI). His155 is an active-site residue. The Cytoplasmic portion of the chain corresponds to 167 to 185 (VEEMAVLHEVKTDRSHCLH). Residues 186 to 206 (VAITALVVALGFLTFIWVWMF) form a helical membrane-spanning segment. At 207 to 218 (LCTAVYFHNLSQ) the chain is on the lumenal side. The active site involves His214. A helical transmembrane segment spans residues 219–239 (KVFGTLFGLLGWYGTYGFWYL). At 240–262 (KSFSPGLPPQSCSSNLKQDSYKR) the chain is on the cytoplasmic side.

It belongs to the FIT family. FIT2 subfamily.

Its subcellular location is the endoplasmic reticulum membrane. It catalyses the reaction an acyl-CoA + H2O = an acyl-4'-phosphopantetheine + adenosine 3',5'-bisphosphate + 2 H(+). The enzyme catalyses (9Z)-octadecenoyl-CoA + H2O = S-(9Z-octadecenoyl)-4'-phosphopantetheine + adenosine 3',5'-bisphosphate + 2 H(+). The catalysed reaction is (5Z,8Z,11Z,14Z)-eicosatetraenoyl-CoA + H2O = S-(5Z,8Z,11Z,14Z-eicosatetraenoyl)-4'-phosphopantetheine + adenosine 3',5'-bisphosphate + 2 H(+). It carries out the reaction hexadecanoyl-CoA + H2O = S-hexadecanoyl-4'-phosphopantetheine + adenosine 3',5'-bisphosphate + 2 H(+). Fatty acyl-coenzyme A (CoA) diphosphatase that hydrolyzes fatty acyl-CoA to yield acyl-4'-phosphopantetheine and adenosine 3',5'-bisphosphate. Preferentially hydrolyzes unsaturated long-chain acyl-CoA substrates such as oleoyl-CoA/(9Z)-octadecenoyl-CoA and arachidonoyl-CoA/(5Z,8Z,11Z,14Z)-eicosatetraenoyl-CoA in the endoplasmic reticulum (ER) lumen. This catalytic activity is required for maintaining ER structure and for lipid droplets (LDs) biogenesis, which are lipid storage organelles involved in maintaining lipid and energy homeostasis. Directly binds to diacylglycerol (DAGs) and triacylglycerol, which is also important for LD biogenesis. May support directional budding of nacent LDs from the ER into the cytosol by reducing DAG levels at sites of LD formation. Plays a role in the regulation of cell morphology and cytoskeletal organization. In Sus scrofa (Pig), this protein is Acyl-coenzyme A diphosphatase FITM2.